The following is an 809-amino-acid chain: Carbon monoxide dehydrogenase large chain (809 aa).

Cysteine 388 contributes to the Cu(+) binding site. Residue glutamate 763 participates in Mo-molybdopterin cytosine dinucleotide binding.

As to quaternary structure, dimer of heterotrimers. Each heterotrimer consists of a large, a medium and a small subunit. It depends on Cu(+) as a cofactor. Requires Mo-molybdopterin cytosine dinucleotide as cofactor.

The catalysed reaction is CO + a quinone + H2O = a quinol + CO2. Functionally, catalyzes the oxidation of carbon monoxide to carbon dioxide. The sequence is that of Carbon monoxide dehydrogenase large chain (coxL) from Afipia carboxidovorans (strain ATCC 49405 / DSM 1227 / KCTC 32145 / OM5) (Oligotropha carboxidovorans).